Consider the following 337-residue polypeptide: Manganese-dependent ADP-ribose/CDP-alcohol diphosphatase (337 aa).

Position 1 is an N-acetylmethionine (Met1). Zn(2+) is bound by residues Asp25, Gln27, Asp74, Asn110, His241, His278, and His280.

This sequence belongs to the ADPRibase-Mn family. As to quaternary structure, monomer. Requires Mg(2+) as cofactor.

It carries out the reaction CDP-choline + H2O = phosphocholine + CMP + 2 H(+). It catalyses the reaction ADP-D-ribose + H2O = D-ribose 5-phosphate + AMP + 2 H(+). The enzyme catalyses CDP-glycerol + H2O = sn-glycerol 3-phosphate + CMP + 2 H(+). Hydrolyzes ADP-ribose, IDP-ribose, CDP-glycerol, CDP-choline and CDP-ethanolamine, but not other non-reducing ADP-sugars or CDP-glucose. May be involved in immune cell signaling as suggested by the second-messenger role of ADP-ribose, which activates TRPM2 as a mediator of oxidative/nitrosative stress. This chain is Manganese-dependent ADP-ribose/CDP-alcohol diphosphatase (ADPRM), found in Bos taurus (Bovine).